The following is a 188-amino-acid chain: Ribosomal RNA small subunit methyltransferase G (188 aa).

Residues Gly-69, Phe-74, 119 to 120 (VQ), and Arg-134 contribute to the S-adenosyl-L-methionine site.

The protein belongs to the methyltransferase superfamily. RNA methyltransferase RsmG family.

Its subcellular location is the cytoplasm. The enzyme catalyses guanosine(527) in 16S rRNA + S-adenosyl-L-methionine = N(7)-methylguanosine(527) in 16S rRNA + S-adenosyl-L-homocysteine. Functionally, specifically methylates the N7 position of guanine in position 527 of 16S rRNA. This Campylobacter jejuni subsp. jejuni serotype O:23/36 (strain 81-176) protein is Ribosomal RNA small subunit methyltransferase G.